Here is a 450-residue protein sequence, read N- to C-terminus: Vimentin beta (450 aa).

Residues 1–81 are head; it reads MSSRTSTSSY…FGLADAINTE (81 aa). A compositionally biased stretch (polar residues) spans 24-38; the sequence is STYSSRQYSSPGRTT. Residues 24-56 are disordered; the sequence is STYSSRQYSSPGRTTSRVSYSSASSTSPSLYMS. Over residues 39–56 the composition is skewed to low complexity; that stretch reads SRVSYSSASSTSPSLYMS. The segment at 82–117 is coil 1A; sequence FKANRTNEKAEMQHVNDRFASYIEEVRFLEQQNKIL. The IF rod domain maps to 89 to 397; that stretch reads EKAEMQHVND…NLLEGEEYRI (309 aa). The segment at 118 to 139 is linker 1; the sequence is TAELEQMRGKGSSRVGDLYEDE. Positions 140–231 are coil 1B; it reads MRELRRQVDQ…KLHDEELAEL (92 aa). The tract at residues 232–254 is linker 12; the sequence is QMQIQERHVQIDMEVAKPDLTAA. The tract at residues 255–393 is coil 2; that stretch reads LRDVRQQYET…ATYRNLLEGE (139 aa). Positions 394-450 are tail; that stretch reads EYRITTPFPNLSSLSLRESMKEIRPAMDSLSKKVVIKTIETRDGHIINQSTQKDNLE.

This sequence belongs to the intermediate filament family. In terms of assembly, homomer. One of the most prominent phosphoproteins in various cells of mesenchymal origin. Phosphorylation is enhanced during cell division, at which time vimentin filaments are significantly reorganized. Expressed in low amounts in retina, optic nerve, brain, and spinal cord and in very high amounts in eye lens.

Vimentins are class-III intermediate filaments found in various non-epithelial cells, especially mesenchymal cells. Vimentin is attached to the nucleus, endoplasmic reticulum, and mitochondria, either laterally or terminally. In Carassius auratus (Goldfish), this protein is Vimentin beta.